The following is a 493-amino-acid chain: Probable polyol transporter 6 (493 aa).

Transmembrane regions (helical) follow at residues 25–45, 54–74, 85–105, 116–136, 142–162, 177–197, 275–295, 313–333, 343–363, 372–392, 414–434, and 444–464; these read SIVSIIFGYDTGVMSGAMVFI, VQIEVLTGILNLCALVGSLLA, YTIVLASILFMLGSILMGWGP, TAGLGVGFALMVAPVYSAEIA, GLLASLPHLCISIGILLGYIV, LMLGIAAVPSLVLAFGILKMP, VLLTALGIHFFQHASGIEAVL, LFLVTIGVGIMKTTFIFTATL, LLLTSVGGMVIALTMLGFGLT, LAWALVLSIVAAYSFVAFFSI, GASLGVAVNRVMNATVSMSFL, and GAFFMFAGVAAVAWNFFFFLL.

Belongs to the major facilitator superfamily. Sugar transporter (TC 2.A.1.1) family.

It is found in the membrane. Functionally, plasma membrane sugar-proton symporter. The sequence is that of Probable polyol transporter 6 (PLT6) from Arabidopsis thaliana (Mouse-ear cress).